We begin with the raw amino-acid sequence, 486 residues long: Retrograde regulation protein 3 (486 aa).

Positions 27–35 (ETLDFSLVT) match the 9aaTAD 1 motif. 2 stretches are compositionally biased toward polar residues: residues 75 to 94 (NNNL…TAST) and 101 to 130 (SQSS…IGQG). The tract at residues 75-130 (NNNLMGSQARSNSQTPTASTIYEEAESQSSYLDDMFRTSQGGRPVTQNSISSIGQG) is disordered. 3 positions are modified to phosphoserine: Ser81, Ser123, and Ser142. Position 150 is a phosphothreonine (Thr150). Residues 189 to 197 (SSINSDMMT) carry the 9aaTAD 2 motif. Residues Ser227, Ser236, and Ser241 each carry the phosphoserine modification. Positions 243 to 274 (RHGSINTPRTRHTSISSNMTENIGPGSVPKIL) are disordered. Positions 246 to 263 (SINTPRTRHTSISSNMTE) are enriched in polar residues. Ser269 carries the phosphoserine modification. The bHLH domain maps to 285–344 (RKREFHNAVERRRRELIKQKIKELGQLVPPSLLNYDDLGKQIKPNKGIILDRTVEYLQYL). Residues 374-395 (ALSPFTNNHHASSGQNNSENSE) are disordered.

As to quaternary structure, binds DNA as a heterodimer with RTG1.

The protein resides in the nucleus. Transcription factor that regulates CIT2 gene expression. Binds to two identical sites oriented as inverted repeats 28 bp apart in a regulatory upstream activation sequence element (UASR) in the CIT2 promoter. The core binding site is 5'-GGTCAC-3'. The protein is Retrograde regulation protein 3 (RTG3) of Saccharomyces cerevisiae (strain ATCC 204508 / S288c) (Baker's yeast).